A 156-amino-acid chain; its full sequence is MRNSDKQERLIKAFKSILKDEKFSSQGEIVDALKAQGFDNINQSKVSRMLTKFGAVRTRNAKMEMVYCLPIELGVPTTTSPLKELVMEVGHNSALVVIHTGPGAAQVIARLLDSLGKAEGILGVVAGDDTIFITPTNTTTTEELFNSVCDLFDYSI.

This sequence belongs to the ArgR family.

Its subcellular location is the cytoplasm. It functions in the pathway amino-acid biosynthesis; L-arginine biosynthesis [regulation]. Its function is as follows. Regulates arginine biosynthesis genes. This Photobacterium profundum (strain SS9) protein is Arginine repressor.